A 471-amino-acid polypeptide reads, in one-letter code: Rho GTPase-activating protein 15 (471 aa).

A disordered region spans residues 1-20; it reads MQKSTNSDIPVETLNPTRQG. The residue at position 43 (S43) is a Phosphoserine. The PH domain maps to 79-189; that stretch reads MVEKEGYLQK…WFHAIKNAID (111 aa). S196, S199, and S243 each carry phosphoserine. A Rho-GAP domain is found at 281-470; sequence SHLHTLCERE…LMLSAYDQIF (190 aa).

The protein resides in the cytoplasm. The protein localises to the membrane. GTPase activator for the Rho-type GTPases by converting them to an inactive GDP-bound state. Has activity toward RAC1. Overexpression results in an increase in actin stress fibers and cell contraction. The polypeptide is Rho GTPase-activating protein 15 (ARHGAP15) (Bos taurus (Bovine)).